We begin with the raw amino-acid sequence, 312 residues long: sn-1-specific diacylglycerol lipase ABHD11 (312 aa).

The transit peptide at 1-14 (MITFKSFHCSRGWH) directs the protein to the mitochondrion. One can recognise an AB hydrolase-1 domain in the interval 62–297 (PPLVLLHGLF…GAGHWVHADK (236 aa)). Catalysis depends on charge relay system residues S136, E232, and H291.

The protein belongs to the AB hydrolase superfamily. In terms of processing, phosphorylated.

It is found in the mitochondrion. The protein localises to the mitochondrion matrix. The catalysed reaction is 1-octadecanoyl-2-(5Z,8Z,11Z,14Z-eicosatetraenoyl)-sn-glycerol + H2O = 2-(5Z,8Z,11Z,14Z-eicosatetraenoyl)-glycerol + octadecanoate + H(+). It catalyses the reaction a 1,2-diacyl-sn-glycerol + H2O = a 2-acylglycerol + a fatty acid + H(+). It carries out the reaction a 1,3-diacyl-sn-glycerol + H2O = a 1-acyl-sn-glycerol + a fatty acid + H(+). The enzyme catalyses 1-octadecanoyl-2-(9Z-octadecenoyl)-sn-glycerol + H2O = 2-(9Z-octadecenoyl)-glycerol + octadecanoate + H(+). The catalysed reaction is 1-octadecanoyl-2-(4Z,7Z,10Z,13Z,16Z,19Z-docosahexaenoyl)-sn-glycerol + H2O = 2-(4Z,7Z,10Z,13Z,16Z,19Z-docosahexaenoyl)-glycerol + octadecanoate + H(+). It catalyses the reaction 1,2-didecanoylglycerol + H2O = decanoylglycerol + decanoate + H(+). Catalyzes the hydrolysis of diacylglycerol in vitro and may function as a key regulator in lipid metabolism, namely by regulating the intracellular levels of diacylglycerol. 1,2-diacyl-sn-glycerols are the preferred substrate over 1,3-diacyl-sn-glycerols. The enzyme hydrolyzes stearate in preference to palmitate from the sn-1 position of 1,2-diacyl-sn-glycerols. This chain is sn-1-specific diacylglycerol lipase ABHD11, found in Xenopus laevis (African clawed frog).